A 184-amino-acid chain; its full sequence is Inactive cytochrome P450 monooxygenase lolP2 (184 aa).

A helical transmembrane segment spans residues Gly10–Leu30. Residues Arg161–Pro184 are disordered. Over residues Thr163 to Pro172 the composition is skewed to basic residues. A compositionally biased stretch (low complexity) spans Arg173 to Pro184.

Belongs to the cytochrome P450 family.

It is found in the membrane. Cytochrome P450 monooxygenase; part of the gene cluster that mediates the biosynthesis of loline alkaloids, potent insecticidal agents composed of a pyrrolizidine ring system and an uncommon ether bridge linking carbons 2 and 7. Lolines are structurally differentiated by the various modifications of the L-amino group and include norloline, loline, N-methylloline, N-acetylloline, N-acetylnorloline, and N-formylloline. The first committed step is the condensation of O-acetyl-L-homoserine (derived from L-aspartic acid) and L-proline, probably catalyzed by the gamma-type pyridoxal 5'-phosphate(PLP)-dependent enzyme lolC, to give the diamino diacid, NACPP. Ensuing cyclization, decarboxylation, and acetylation steps yield 1-exo-acetamidopyrrolizidine (AcAP). LolO is required for installation of the ether bridge upon the pathway intermediate, 1-exo-acetamidopyrrolizidine (AcAP). In sequential 2-oxoglutarate- and O(2)-consuming steps, lolO removes hydrogens from C2 and C7 of AcAP to form both carbon-oxygen bonds in N-acetylnorloline (NANL), the precursor to all other lolines. The enzymes lolD, lolE, lolF and lolT have also been proposed to be involved in the ether-bridge installation. Further processing of the exocyclic moiety of NANL by fungal N-acetamidase (LolN), methyltransferase (LolM), and cytochrome P450 (LolP) enzymes, with occasional involvement of a plant acetyltransferase, generates the other known lolines. LolN transforms NANL to norlonine which is monomethylated and dimethylated to respectively lonine and N-methyllonine (NML) by lolM. LolP catalyzes hydroxylation of the methyl group in N-methylloline (NML) and further oxygenation to N-formylloline (NFL). A plant acetyltransferase is responsible for the acetylation of loline to form N-acetylloline (NAL). LolA might interact with aspartate kinase to prevent feedback inhibition of its activity by these end products and thereby promote production of L-homoserine from L-aspartate. The chain is Inactive cytochrome P450 monooxygenase lolP2 from Epichloe uncinata (Endophyte fungus).